The chain runs to 75 residues: Alpha-elapitoxin-Bc2a (75 aa).

The N-terminal stretch at 1 to 2 is a signal peptide; sequence YT. Cystine bridges form between C5–C24, C17–C45, C30–C34, C49–C60, and C61–C66.

The protein belongs to the three-finger toxin family. Long-chain subfamily. Type II alpha-neurotoxin sub-subfamily. In terms of assembly, monomer in solution, homodimer in crystal state. In terms of tissue distribution, expressed by the venom gland.

The protein localises to the secreted. Its function is as follows. Binds to muscular and neuronal nicotinic acetylcholine receptor (nAChR) and inhibits acetylcholine from binding to the receptor, thereby impairing neuromuscular and neuronal transmission. Reversibly blocks chick and mouse muscle nicotinic acetylcholine receptors. Blocks muscle type nAChR with an IC(50)=30 nM, when heterologously expressed in oocytes. Also binds with high affinity to alpha-7/CHRNA7 nAChRs. In addition, shows a weak inhibition of neuronal alpha-3-beta-2/CHRNA3-CHRNB2 nAChR (IC(50)=2.9 uM). Selectively binds to alpha-1-delta subunit interface of the mouse muscle nicotinic acetylcholine receptor, with a 10-fold higher affinity for the adult than for the fetal receptors. In vivo, when intraperitoneally injected into mice, causes flaccid paralysis and respiratory distress, followed by death within 2-4 hours. This Bungarus candidus (Malayan krait) protein is Alpha-elapitoxin-Bc2a.